The sequence spans 906 residues: Inactive angiotensin-converting enzyme-related protein (906 aa).

The first 19 residues, 1–19 (MKFHILLLLLVGACLPVFT), serve as a signal peptide directing secretion. The disordered stretch occupies residues 28–95 (LLPADEAPKD…SPTPEPEPAI (68 aa)). Residues 67 to 83 (PEPKPEPEPEPEPKPEP) are compositionally biased toward basic and acidic residues. N-linked (GlcNAc...) asparagine glycosylation is present at N159. Residues 175–765 (IKDEEKLRSW…EIDQVVVGWD (591 aa)) form the Peptidase M2 domain. Residues C289 and C297 are joined by a disulfide bond. Residue N653 is glycosylated (N-linked (GlcNAc...) asparagine). The interval 862 to 882 (VTTPEPSAEPEPTAKTTTKMP) is disordered. The segment covering 863–882 (TTPEPSAEPEPTAKTTTKMP) has biased composition (low complexity).

The protein belongs to the peptidase M2 family. As to expression, expressed in the hypodermis, in the vulva during organogenesis, and in the ray papillae of the male tail.

Inactive as a metallopeptidase, due to a lack of active site residues. Required for larval molting, male tail development, and formation of adult alae. Acts in the heterochronic pathway and plays a role in the developmental timing of postembryonic hypodermal seam cell division and adult alae production. Acts synergistically with apl-1 in let-7 regulated postembryonic cell division events. Might act downstream of the heterochronic protein lin-41. Negative regulator of lifespan, heat and oxidative stress response and age-related degenerative changes like reduced pharyngeal pumping and decreased body movements. Lifespan restriction is dependent on the forkhead-type transcription factor daf-16. This is Inactive angiotensin-converting enzyme-related protein from Caenorhabditis elegans.